The primary structure comprises 402 residues: B3 domain-containing protein Os01g0723500 (402 aa).

The segment at residues R18–T121 is a DNA-binding region (TF-B3 1). Positions E126–L203 are disordered. Residues D152–G162 show a composition bias toward basic and acidic residues. Polar residues predominate over residues S173 to T186. Positions C289–V381 form a DNA-binding region, TF-B3 2.

It localises to the nucleus. The protein is B3 domain-containing protein Os01g0723500 of Oryza sativa subsp. japonica (Rice).